The chain runs to 199 residues: MTEEQVLNTHNAEILLSAANKSHYPQDDLPEVALAGRSNVGKSSFINTLLGRKNLARTSGKPGKTQLLNFYNIDDKLRFVDVPGYGYARVSKKERAKWGKMIEEYLVTRDNLRVVVSLVDLRHEPTQDDIQMYEFLKYYEIPVIVVATKADKIPRGKWNKHESIIKKKLNFDKNDHFIVFSSVTRDGYDEAWDTILAEL.

The 172-residue stretch at 28–199 (DLPEVALAGR…EAWDTILAEL (172 aa)) folds into the EngB-type G domain. Residues 36-43 (GRSNVGKS), 63-67 (GKTQL), 81-84 (DVPG), 148-151 (TKAD), and 180-182 (FSS) each bind GTP. Serine 43 and threonine 65 together coordinate Mg(2+).

It belongs to the TRAFAC class TrmE-Era-EngA-EngB-Septin-like GTPase superfamily. EngB GTPase family. It depends on Mg(2+) as a cofactor.

Necessary for normal cell division and for the maintenance of normal septation. This chain is Probable GTP-binding protein EngB, found in Streptococcus thermophilus (strain CNRZ 1066).